Consider the following 181-residue polypeptide: TATA-box-binding protein (181 aa).

A run of 2 repeats spans residues 7-83 (VVNV…VKEL) and 98-173 (VQNM…SKTL).

The protein belongs to the TBP family.

Its function is as follows. General factor that plays a role in the activation of archaeal genes transcribed by RNA polymerase. Binds specifically to the TATA box promoter element which lies close to the position of transcription initiation. This Methanococcus maripaludis (strain DSM 14266 / JCM 13030 / NBRC 101832 / S2 / LL) protein is TATA-box-binding protein.